Consider the following 660-residue polypeptide: Methionine--tRNA ligase (660 aa).

A 'HIGH' region motif is present at residues 11–21; the sequence is PYANGPCHLGH. Cys143, Cys146, Cys155, and Cys158 together coordinate Zn(2+). Residues 325–329 carry the 'KMSKS' region motif; the sequence is KMSTS. Thr328 serves as a coordination point for ATP. The region spanning 563-660 is the tRNA-binding domain; the sequence is DFDKVVIKIG…DECEVGERIQ (98 aa).

It belongs to the class-I aminoacyl-tRNA synthetase family. MetG type 1 subfamily. Homodimer. Requires Zn(2+) as cofactor.

The protein resides in the cytoplasm. It carries out the reaction tRNA(Met) + L-methionine + ATP = L-methionyl-tRNA(Met) + AMP + diphosphate. In terms of biological role, is required not only for elongation of protein synthesis but also for the initiation of all mRNA translation through initiator tRNA(fMet) aminoacylation. In Methanobrevibacter smithii (strain ATCC 35061 / DSM 861 / OCM 144 / PS), this protein is Methionine--tRNA ligase.